The sequence spans 657 residues: Serine/threonine kinase NLK (657 aa).

Residues Ser-208–Leu-554 enclose the Protein kinase domain. ATP is bound by residues Ile-214–Val-222 and Lys-237. Asp-391 (proton acceptor) is an active-site residue.

This sequence belongs to the protein kinase superfamily. Ser/Thr protein kinase family. As to quaternary structure, component of the beta-catenin-lit-1 complex (also called the lit-1/wrm-1 complex or the wrm-1/lit-1 kinase complex) at least composed of lit-1 and wrm-1. Interacts with wrm-1 (via N-terminus); the interaction is direct and activates lit-1 kinase activity which leads to the phosphorylation of pop-1. This promotes pop-1 interaction with par-5 and translocation of pop-1 from the nucleus to the cytoplasm. Interacts with pop-1 (when phosphorylated on 'Ser-125'); the interaction is dependent on the beta-catenin-lit-1 complex. Mg(2+) is required as a cofactor.

The protein localises to the cytoplasm. It is found in the cell cortex. Its subcellular location is the nucleus. It catalyses the reaction L-seryl-[protein] + ATP = O-phospho-L-seryl-[protein] + ADP + H(+). It carries out the reaction L-threonyl-[protein] + ATP = O-phospho-L-threonyl-[protein] + ADP + H(+). In terms of biological role, has a role in the Wnt signaling pathway controlling the asymmetry of cell divisions during embryogenesis. Operates in the AB and EMS cell lineages influencing cell specification. Required for body wall muscle development, endoderm development, pop-1 asymmetry and T-cell division asymmetry. Component of the beta-catenin-lit-1 complex which promotes the phosphorylation, down-regulation and subcellular relocation of pop-1. Regulates plp-1 nuclear localization in embryos. Plays a role in male tail tip morphogenesis. The chain is Serine/threonine kinase NLK from Caenorhabditis briggsae.